A 410-amino-acid chain; its full sequence is O-methyltransferase afvC (410 aa).

S-adenosyl-L-methionine-binding positions include 253-254 (GG), Asp-278, 299-300 (DF), and Arg-315. His-319 (proton acceptor) is an active-site residue.

The protein belongs to the class I-like SAM-binding methyltransferase superfamily. Cation-independent O-methyltransferase family. COMT subfamily.

The protein operates within secondary metabolite biosynthesis. Its function is as follows. O-methyltransferase; part of the gene cluster that mediates the biosynthesis of aflavarin, a bicoumarin that exhibits anti-insectan activity against the fungivorous beetle C.hemipterus. The polypeptide is O-methyltransferase afvC (Aspergillus flavus (strain ATCC 200026 / FGSC A1120 / IAM 13836 / NRRL 3357 / JCM 12722 / SRRC 167)).